The primary structure comprises 78 residues: Acyl carrier protein (78 aa).

The 76-residue stretch at 2-77 (SNIEDRVRKI…AAIDYVNSAS (76 aa)) folds into the Carrier domain. Position 37 is an O-(pantetheine 4'-phosphoryl)serine (S37).

This sequence belongs to the acyl carrier protein (ACP) family. Post-translationally, 4'-phosphopantetheine is transferred from CoA to a specific serine of apo-ACP by AcpS. This modification is essential for activity because fatty acids are bound in thioester linkage to the sulfhydryl of the prosthetic group.

It localises to the cytoplasm. The protein operates within lipid metabolism; fatty acid biosynthesis. Its function is as follows. Carrier of the growing fatty acid chain in fatty acid biosynthesis. In Photobacterium profundum (strain SS9), this protein is Acyl carrier protein.